Reading from the N-terminus, the 499-residue chain is Rhamnogalacturonate lyase A (499 aa).

Positions 1 to 20 (MLSKTSLLSLLSLAAGVVNA) are cleaved as a signal peptide. 2 cysteine pairs are disulfide-bonded: Cys-49-Cys-92 and Cys-183-Cys-192.

It belongs to the polysaccharide lyase 4 family.

It is found in the secreted. It carries out the reaction Endotype eliminative cleavage of L-alpha-rhamnopyranosyl-(1-&gt;4)-alpha-D-galactopyranosyluronic acid bonds of rhamnogalacturonan I domains in ramified hairy regions of pectin leaving L-rhamnopyranose at the reducing end and 4-deoxy-4,5-unsaturated D-galactopyranosyluronic acid at the non-reducing end.. Pectinolytic enzymes consist of four classes of enzymes: pectin lyase, polygalacturonase, pectin methylesterase and rhamnogalacturonase. Degrades the rhamnogalacturonan I (RG-I) backbone of pectin. The polypeptide is Rhamnogalacturonate lyase A (rglA) (Aspergillus niger).